The sequence spans 241 residues: uncharacterized protein (241 aa).

Residues 78–80, Gly111, Ile131, and 138–140 each bind S-adenosyl-L-methionine; these read TSA and SSL.

It belongs to the class IV-like SAM-binding methyltransferase superfamily. RNA methyltransferase TrmH family.

This is an uncharacterized protein from Haemophilus influenzae (strain ATCC 51907 / DSM 11121 / KW20 / Rd).